Here is a 407-residue protein sequence, read N- to C-terminus: E3 ubiquitin-protein ligase TRIM13 (407 aa).

The segment at 10–58 adopts an RING-type zinc-finger fold; sequence CPICCSLFDDPRVLPCSHNFCKKCLEGLLEGNVRNSLWRPSPFKCPTCR. The B box-type zinc finger occupies 89–131; that stretch reads PKMPVCKEHLGQPLNIFCVTDMQLICGVCATRGSHTKHVFSSI. Zn(2+)-binding residues include Cys94, His97, Cys117, and His123. Positions 172–200 form a coiled coil; the sequence is LQLLTKDSDKVKEFFEKLQHTLDQKKNEI. The helical transmembrane segment at 316 to 336 threads the bilayer; the sequence is LLLMAVVLLGLLVFFGPTVFL.

Interacts (via C-terminal domain) with VCP. Interacts with AKT1; the interaction ubiquitinates AKT1 and leads to its proteasomal degradation. Interacts with MDM2; the interaction ubiquitinates AKT1 and leads to its proteasomal degradation. Interacts with p62/SQSTM1. Interacts with TRAF6. Interacts with IKBKG/NEMO. In terms of processing, auto-ubiquitinated; requires the RING-type zinc finger. Auto-polyubiquitination leads to proteasomal degradation.

The protein resides in the endoplasmic reticulum membrane. The enzyme catalyses S-ubiquitinyl-[E2 ubiquitin-conjugating enzyme]-L-cysteine + [acceptor protein]-L-lysine = [E2 ubiquitin-conjugating enzyme]-L-cysteine + N(6)-ubiquitinyl-[acceptor protein]-L-lysine.. The protein operates within protein modification; protein ubiquitination. Functionally, endoplasmic reticulum (ER) membrane anchored E3 ligase involved in the retrotranslocation and turnover of membrane and secretory proteins from the ER through a set of processes named ER-associated degradation (ERAD). This process acts on misfolded proteins as well as in the regulated degradation of correctly folded proteins. Enhances ionizing radiation-induced p53/TP53 stability and apoptosis via ubiquitinating MDM2 and AKT1 and decreasing AKT1 kinase activity through MDM2 and AKT1 proteasomal degradation. Regulates ER stress-induced autophagy, and may act as a tumor suppressor. Also plays a role in innate immune response by stimulating NF-kappa-B activity in the TLR2 signaling pathway. Ubiquitinates TRAF6 via the 'Lys-29'-linked polyubiquitination chain resulting in NF-kappa-B activation. Participates as well in T-cell receptor-mediated NF-kappa-B activation. In the presence of TNF, modulates the IKK complex by regulating IKBKG/NEMO ubiquitination leading to the repression of NF-kappa-B. In Rattus norvegicus (Rat), this protein is E3 ubiquitin-protein ligase TRIM13 (Trim13).